Here is a 309-residue protein sequence, read N- to C-terminus: Ribose-phosphate pyrophosphokinase (309 aa).

ATP-binding positions include 37-39 (DGE) and 96-97 (RQ). Residues His130 and Asp169 each coordinate Mg(2+). Residue Lys192 is part of the active site. D-ribose 5-phosphate-binding positions include Arg194, Asp218, and 222 to 226 (DTAGT).

It belongs to the ribose-phosphate pyrophosphokinase family. Class I subfamily. Homohexamer. Mg(2+) is required as a cofactor.

The protein localises to the cytoplasm. The enzyme catalyses D-ribose 5-phosphate + ATP = 5-phospho-alpha-D-ribose 1-diphosphate + AMP + H(+). Its pathway is metabolic intermediate biosynthesis; 5-phospho-alpha-D-ribose 1-diphosphate biosynthesis; 5-phospho-alpha-D-ribose 1-diphosphate from D-ribose 5-phosphate (route I): step 1/1. Its function is as follows. Involved in the biosynthesis of the central metabolite phospho-alpha-D-ribosyl-1-pyrophosphate (PRPP) via the transfer of pyrophosphoryl group from ATP to 1-hydroxyl of ribose-5-phosphate (Rib-5-P). This is Ribose-phosphate pyrophosphokinase from Campylobacter jejuni subsp. jejuni serotype O:2 (strain ATCC 700819 / NCTC 11168).